Here is a 352-residue protein sequence, read N- to C-terminus: C-C chemokine receptor type 5 (352 aa).

Over 1–30 (MDYQVSSPTYDIDYYTSEPCQKINVKQIAA) the chain is Extracellular. A Sulfotyrosine modification is found at Y3. O-linked (GalNAc...) serine glycosylation is found at S6 and S7. Residues Y10, Y14, and Y15 each carry the sulfotyrosine modification. 2 disulfides stabilise this stretch: C20/C269 and C101/C178. Residues 31–58 (RLLPPLYSLVFIFGFVGNILVVLILINC) traverse the membrane as a helical segment. The Cytoplasmic segment spans residues 59 to 68 (KRLKSMTDIY). Residues 69–89 (LLNLAISDLLFLLTVPFWAHY) form a helical membrane-spanning segment. Over 90 to 102 (AAAQWDFGNTMCQ) the chain is Extracellular. A helical membrane pass occupies residues 103 to 124 (LLTGLYFIGFFSGIFFIILLTI). Residues 125–141 (DRYLAIVHAVFALKART) are Cytoplasmic-facing. A helical membrane pass occupies residues 142–166 (VTFGVVTSVITWVVAVFASLPGIIF). At 167–198 (TRSQREGLHYTCSSHFPYSQYQFWKNFQTLKM) the chain is on the extracellular side. The chain crosses the membrane as a helical span at residues 199–218 (VILGLVLPLLVMVICYSGIL). The Cytoplasmic portion of the chain corresponds to 219–235 (KTLLRCRNEKKRHRAVR). Residues 236–260 (LIFTIMIVYFLFWAPYNIVLLLNTF) traverse the membrane as a helical segment. The Extracellular segment spans residues 261-277 (QEFFGLNNCSSSNRLDQ). Residues 278–301 (AMQVTETLGMTHCCINPIIYAFVG) traverse the membrane as a helical segment. The Cytoplasmic segment spans residues 302–352 (EKFRNYLLVFFQKHIAKRFCKCCSIFQQEAPERASSVYTRSTAEQEISVGL). S-palmitoyl cysteine attachment occurs at residues C321, C323, and C324. S336, S337, S342, and S349 each carry phosphoserine; by BARK1.

The protein belongs to the G-protein coupled receptor 1 family. In terms of assembly, interacts with PRAF2. Efficient ligand binding to CCL3/MIP-1alpha and CCL4/MIP-1beta requires sulfation, O-glycosylation and sialic acid modifications. Glycosylation on Ser-6 is required for efficient binding of CCL4. Interacts with GRK2. Interacts with ARRB1 and ARRB2. Interacts with CNIH4. Interacts with S100A4; this interaction stimulates T-lymphocyte chemotaxis. Sulfated on at least 2 of the N-terminal tyrosines. Sulfation is required for efficient binding of the chemokines, CCL3 and CCL4. In terms of processing, palmitoylation in the C-terminal is important for cell surface expression. Post-translationally, phosphorylation on serine residues in the C-terminal is stimulated by binding CC chemokines especially by APO-RANTES. O-glycosylated, but not N-glycosylated. Ser-6 appears to be the major site even if Ser-7 may be also O-glycosylated. Also sialylated glycans present which contribute to chemokine binding. Thr-16 and Ser-17 may also be glycosylated and, if so, with small moieties such as a T-antigen.

Its subcellular location is the cell membrane. In terms of biological role, receptor for a number of inflammatory CC-chemokines including CCL3/MIP-1-alpha, CCL4/MIP-1-beta and RANTES and subsequently transduces a signal by increasing the intracellular calcium ion level. May play a role in the control of granulocytic lineage proliferation or differentiation. Participates in T-lymphocyte migration to the infection site by acting as a chemotactic receptor. The protein is C-C chemokine receptor type 5 (CCR5) of Macaca arctoides (Stump-tailed macaque).